Consider the following 388-residue polypeptide: Probable pectin lyase F-1 (388 aa).

The N-terminal stretch at 1–19 (MKTATFSTLLALSASAVNA) is a signal peptide. The cysteines at positions 80 and 103 are disulfide-linked. N-linked (GlcNAc...) asparagine glycosylation occurs at Asn126. Arg253 is an active-site residue. Cys328 and Cys336 are oxidised to a cystine.

This sequence belongs to the polysaccharide lyase 1 family.

It localises to the secreted. It catalyses the reaction Eliminative cleavage of (1-&gt;4)-alpha-D-galacturonan methyl ester to give oligosaccharides with 4-deoxy-6-O-methyl-alpha-D-galact-4-enuronosyl groups at their non-reducing ends.. Pectinolytic enzymes consist of four classes of enzymes: pectin lyase, polygalacturonase, pectin methylesterase and rhamnogalacturonase. Among pectinolytic enzymes, pectin lyase is the most important in depolymerization of pectin, since it cleaves internal glycosidic bonds of highly methylated pectins. This chain is Probable pectin lyase F-1 (pelF-1), found in Aspergillus terreus (strain NIH 2624 / FGSC A1156).